Here is a 566-residue protein sequence, read N- to C-terminus: Alpha-N-acetylgalactosaminide alpha-2,6-sialyltransferase 1 (566 aa).

Residues 1-16 (MGFLIRRLPKDSRIFR) are Cytoplasmic-facing. The helical; Signal-anchor for type II membrane protein transmembrane segment at 17–37 (WLLILTVFSFIITSFSALFGM) threads the bilayer. At 38-566 (EKSIFRQLKI…ENIMKLYQRS (529 aa)) the chain is on the lumenal side. Residues Asn66 and Asn132 are each glycosylated (N-linked (GlcNAc...) asparagine). Residues 138 to 161 (ASVVERTKEKTTARPVPGVGEADG) are disordered. Asn192 carries N-linked (GlcNAc...) asparagine glycosylation. Repeat unit 1 spans residues 247-254 (SSSPVSTC). The tract at residues 247–337 (SSSPVSTCSE…ANSSSNVSTC (91 aa)) is 2 X 8 AA repeats of S-S-S-X-V-S-T-C. Intrachain disulfides connect Cys254/Cys337 and Cys340/Cys508. Residues Asn275, Asn286, Asn306, Asn329, and Asn333 are each glycosylated (N-linked (GlcNAc...) asparagine). Repeat unit 2 spans residues 330 to 337 (SSSNVSTC).

This sequence belongs to the glycosyltransferase 29 family. In terms of tissue distribution, heart, kidney, testes, brain, liver and lung.

Its subcellular location is the golgi apparatus membrane. It catalyses the reaction a beta-D-galactosyl-(1-&gt;3)-N-acetyl-alpha-D-galactosaminyl derivative + CMP-N-acetyl-beta-neuraminate = a beta-D-galactosyl-(1-&gt;3)-[N-acetyl-alpha-neuraminyl-(2-&gt;6)]-N-acetyl-alpha-D-galactosaminyl derivative + CMP + H(+). It carries out the reaction a 3-O-[N-acetyl-alpha-D-galactosaminyl]-L-seryl-[protein] + CMP-N-acetyl-beta-neuraminate = a 3-O-[N-acetyl-alpha-neuraminosyl-(2-&gt;6)-N-acetyl-alpha-D-galactosaminyl]-L-seryl-[protein] + CMP + H(+). The enzyme catalyses a 3-O-[N-acetyl-alpha-D-galactosaminyl]-L-threonyl-[protein] + CMP-N-acetyl-beta-neuraminate = a 3-O-[N-acetyl-alpha-neuraminosyl-(2-&gt;6)-N-acetyl-alpha-D-galactosaminyl]-L-threonyl-[protein] + CMP + H(+). The catalysed reaction is a 3-O-[beta-D-galactosyl-(1-&gt;3)-N-acetyl-alpha-D-galactosaminyl]-L-seryl-[protein] + CMP-N-acetyl-beta-neuraminate = a 3-O-{beta-D-galactosyl-(1-&gt;3)-[N-acetyl-alpha-neuraminosyl-(2-&gt;6)]-N-acetyl-alpha-D-galactosaminyl}-L-seryl-[protein] + CMP + H(+). It catalyses the reaction a 3-O-[beta-D-galactosyl-(1-&gt;3)-N-acetyl-alpha-D-galactosaminyl]-L-threonyl-[protein] + CMP-N-acetyl-beta-neuraminate = a 3-O-{beta-D-galactosyl-(1-&gt;3)-[N-acetyl-alpha-neuraminosyl-(2-&gt;6)]-N-acetyl-alpha-D-galactosaminyl}-L-threonyl-[protein] + CMP + H(+). It carries out the reaction a 3-O-[N-acetyl-alpha-neuraminyl-(2-&gt;3)-beta-D-galactosyl-(1-&gt;3)-N-acetyl-alpha-D-galactosaminyl]-L-threonyl-[protein] + CMP-N-acetyl-beta-neuraminate = a 3-O-{alpha-Neu5Ac-(2-&gt;3)-beta-D-Gal-(1-&gt;3)-[alpha-Neu5Ac-(2-&gt;6)]-alpha-D-GalNAc}-L-threonyl-[protein] + CMP + H(+). The protein operates within protein modification; protein glycosylation. Functionally, protein sialyltransferase specifically expressed in goblet cells that plays a key role in intestinal host-commensal homeostasis. Conjugates sialic acid with an alpha-2-6 linkage to N-acetylgalactosamine (GalNAc) glycan chains linked to serine or threonine in glycoproteins. Generates sialylated T and Tn antigens.. The sequence is that of Alpha-N-acetylgalactosaminide alpha-2,6-sialyltransferase 1 (ST6GALNAC1) from Gallus gallus (Chicken).